The following is a 253-amino-acid chain: Transcriptional regulatory protein TcrA (253 aa).

The Response regulatory domain occupies 24–138 (RILVVEDEPK…ELFARLRALS (115 aa)). Asp73 carries the 4-aspartylphosphate modification. The ompR/PhoB-type DNA-binding region spans 146-244 (PPTLEAGDLR…IRGAGYRLRK (99 aa)).

As to quaternary structure, interacts with HK2. In terms of processing, phosphorylated by HK2.

Its subcellular location is the cytoplasm. Member of the three-protein two-component system HK1/HK2/TcrA. This Mycobacterium tuberculosis (strain ATCC 25618 / H37Rv) protein is Transcriptional regulatory protein TcrA (tcrA).